A 145-amino-acid polypeptide reads, in one-letter code: D-aminoacyl-tRNA deacylase (145 aa).

Residues 137-138 carry the Gly-cisPro motif, important for rejection of L-amino acids motif; that stretch reads GP.

Belongs to the DTD family. As to quaternary structure, homodimer.

It is found in the cytoplasm. It catalyses the reaction glycyl-tRNA(Ala) + H2O = tRNA(Ala) + glycine + H(+). The catalysed reaction is a D-aminoacyl-tRNA + H2O = a tRNA + a D-alpha-amino acid + H(+). Functionally, an aminoacyl-tRNA editing enzyme that deacylates mischarged D-aminoacyl-tRNAs. Also deacylates mischarged glycyl-tRNA(Ala), protecting cells against glycine mischarging by AlaRS. Acts via tRNA-based rather than protein-based catalysis; rejects L-amino acids rather than detecting D-amino acids in the active site. By recycling D-aminoacyl-tRNA to D-amino acids and free tRNA molecules, this enzyme counteracts the toxicity associated with the formation of D-aminoacyl-tRNA entities in vivo and helps enforce protein L-homochirality. The chain is D-aminoacyl-tRNA deacylase from Salmonella agona (strain SL483).